Here is a 79-residue protein sequence, read N- to C-terminus: UPF0175 protein APE_0890a.1 (79 aa).

This sequence belongs to the UPF0175 family.

The polypeptide is UPF0175 protein APE_0890a.1 (Aeropyrum pernix (strain ATCC 700893 / DSM 11879 / JCM 9820 / NBRC 100138 / K1)).